The chain runs to 483 residues: Galactose-3-O-sulfotransferase 4 (483 aa).

At 1–18 the chain is on the cytoplasmic side; that stretch reads MGVLSPTRTMRLWGPRSL. A helical; Signal-anchor for type II membrane protein transmembrane segment spans residues 19 to 39; sequence GVALGVFMTIGFALQLLGGPF. The Lumenal segment spans residues 40–483; it reads QRRLPGLQLR…PLKTSRRPSP (444 aa). Residues 225–248 form a disordered region; it reads KRGNPHVSRDPNPPQLPSGAGPPA. A glycan (N-linked (GlcNAc...) asparagine) is linked at asparagine 371.

This sequence belongs to the galactose-3-O-sulfotransferase family. It depends on Mn(2+) as a cofactor.

The protein localises to the golgi apparatus. It is found in the golgi stack membrane. It functions in the pathway protein modification; carbohydrate sulfation. In terms of biological role, catalyzes the transfer of sulfate to beta-1,3-linked galactose residues in O-linked glycoproteins. Good substrates include asialofetuin, Gal-beta-1,3-GalNAc and Gal-beta-1,3 (GlcNAc-beta-1,6)GalNAc. The sequence is that of Galactose-3-O-sulfotransferase 4 (GAL3ST4) from Bos taurus (Bovine).